The sequence spans 286 residues: Polyamine aminopropyltransferase (286 aa).

Residues 5-238 form the PABS domain; the sequence is TMWHETLHDQ…GIMTFAWATD (234 aa). S-methyl-5'-thioadenosine is bound at residue glutamine 33. The spermidine site is built by histidine 64 and aspartate 88. S-methyl-5'-thioadenosine is bound by residues glutamate 108 and 140 to 141; that span reads DG. Catalysis depends on aspartate 158, which acts as the Proton acceptor. 158–161 provides a ligand contact to spermidine; that stretch reads DCTD. Proline 165 contacts S-methyl-5'-thioadenosine.

The protein belongs to the spermidine/spermine synthase family. As to quaternary structure, homodimer or homotetramer.

Its subcellular location is the cytoplasm. It catalyses the reaction S-adenosyl 3-(methylsulfanyl)propylamine + putrescine = S-methyl-5'-thioadenosine + spermidine + H(+). Its pathway is amine and polyamine biosynthesis; spermidine biosynthesis; spermidine from putrescine: step 1/1. Functionally, catalyzes the irreversible transfer of a propylamine group from the amino donor S-adenosylmethioninamine (decarboxy-AdoMet) to putrescine (1,4-diaminobutane) to yield spermidine. The polypeptide is Polyamine aminopropyltransferase (Salmonella paratyphi A (strain ATCC 9150 / SARB42)).